Consider the following 313-residue polypeptide: tRNA dimethylallyltransferase (313 aa).

17-24 is an ATP binding site; sequence GPTASGKT. 19–24 contacts substrate; sequence TASGKT. Interaction with substrate tRNA regions lie at residues 42–45, 166–170, and 247–252; these read DSAL, QRLSR, and RCVGYR.

The protein belongs to the IPP transferase family. In terms of assembly, monomer. It depends on Mg(2+) as a cofactor.

It carries out the reaction adenosine(37) in tRNA + dimethylallyl diphosphate = N(6)-dimethylallyladenosine(37) in tRNA + diphosphate. Its function is as follows. Catalyzes the transfer of a dimethylallyl group onto the adenine at position 37 in tRNAs that read codons beginning with uridine, leading to the formation of N6-(dimethylallyl)adenosine (i(6)A). This is tRNA dimethylallyltransferase from Yersinia pseudotuberculosis serotype O:1b (strain IP 31758).